Consider the following 179-residue polypeptide: ADP-ribosylation factor-like protein 5A (179 aa).

G2 is lipidated: N-myristoyl glycine. GTP-binding positions include 23-30, 66-70, 125-128, and A159; these read GLDNAGKT, DIGGQ, and NKQD.

The protein belongs to the small GTPase superfamily. Arf family.

In terms of biological role, lacks ADP-ribosylation enhancing activity. This chain is ADP-ribosylation factor-like protein 5A (Arl5a), found in Mus musculus (Mouse).